The sequence spans 463 residues: Ribulose bisphosphate carboxylase (463 aa).

A substrate-binding site is contributed by Asn-116. Lys-171 acts as the Proton acceptor in catalysis. Lys-173 lines the substrate pocket. The Mg(2+) site is built by Lys-196, Asp-198, and Glu-199. Lys-196 carries the N6-carboxylysine modification. His-294 functions as the Proton acceptor in the catalytic mechanism. 3 residues coordinate substrate: Arg-295, His-328, and Ser-375.

This sequence belongs to the RuBisCO large chain family. Type II subfamily. In terms of assembly, homodimer. Requires Mg(2+) as cofactor.

The catalysed reaction is 2 (2R)-3-phosphoglycerate + 2 H(+) = D-ribulose 1,5-bisphosphate + CO2 + H2O. It carries out the reaction D-ribulose 1,5-bisphosphate + O2 = 2-phosphoglycolate + (2R)-3-phosphoglycerate + 2 H(+). Its function is as follows. RuBisCO catalyzes two reactions: the carboxylation of D-ribulose 1,5-bisphosphate, the primary event in carbon dioxide fixation, as well as the oxidative fragmentation of the pentose substrate. Both reactions occur simultaneously and in competition at the same active site. The sequence is that of Ribulose bisphosphate carboxylase from Hydrogenovibrio marinus.